A 102-amino-acid chain; its full sequence is Large ribosomal subunit protein bL21 (102 aa).

This sequence belongs to the bacterial ribosomal protein bL21 family. In terms of assembly, part of the 50S ribosomal subunit. Contacts protein L20.

In terms of biological role, this protein binds to 23S rRNA in the presence of protein L20. The protein is Large ribosomal subunit protein bL21 of Citrifermentans bemidjiense (strain ATCC BAA-1014 / DSM 16622 / JCM 12645 / Bem) (Geobacter bemidjiensis).